Reading from the N-terminus, the 262-residue chain is Ribosomal RNA small subunit methyltransferase A (262 aa).

His13, Leu15, Gly40, Glu61, Asp85, and Asn103 together coordinate S-adenosyl-L-methionine.

It belongs to the class I-like SAM-binding methyltransferase superfamily. rRNA adenine N(6)-methyltransferase family. RsmA subfamily.

Its subcellular location is the cytoplasm. It carries out the reaction adenosine(1518)/adenosine(1519) in 16S rRNA + 4 S-adenosyl-L-methionine = N(6)-dimethyladenosine(1518)/N(6)-dimethyladenosine(1519) in 16S rRNA + 4 S-adenosyl-L-homocysteine + 4 H(+). Functionally, specifically dimethylates two adjacent adenosines (A1518 and A1519) in the loop of a conserved hairpin near the 3'-end of 16S rRNA in the 30S particle. May play a critical role in biogenesis of 30S subunits. The polypeptide is Ribosomal RNA small subunit methyltransferase A (Bordetella petrii (strain ATCC BAA-461 / DSM 12804 / CCUG 43448)).